The sequence spans 1087 residues: Alpha-mannosidase G (1087 aa).

Zn(2+)-binding residues include His-264, Asp-266, Asp-376, and His-579. Asp-376 acts as the Nucleophile in catalysis.

It belongs to the glycosyl hydrolase 38 family. Requires Zn(2+) as cofactor.

The enzyme catalyses Hydrolysis of terminal, non-reducing alpha-D-mannose residues in alpha-D-mannosides.. The sequence is that of Alpha-mannosidase G (manG) from Dictyostelium discoideum (Social amoeba).